Reading from the N-terminus, the 961-residue chain is Replication protein 1a (961 aa).

Residues 48–380 are methyltransferase; sequence VRNKLSIEEA…VIINGQAIMA (333 aa). An Alphavirus-like MT domain is found at 71 to 260; the sequence is NLTQQYHAPH…HGWQDLGSFF (190 aa). Positions 392 to 409 are membrane association; it reads VAFALTLNLYQKYEKLTA. A compositionally biased stretch (basic residues) spans 503 to 512; it reads KTKRSKKKAK. The disordered stretch occupies residues 503-541; it reads KTKRSKKKAKVPPAAEIPQEEFHDAPESSSPESVSDDVK. The 156-residue stretch at 655–810 folds into the (+)RNA virus helicase ATP-binding domain; the sequence is DKTCACSNLR…NLQYDRRDVV (156 aa). Residues 682–946 form an ATP-dependent helicase region; sequence MVDGVAGCGK…TRHKKSFEYC (265 aa). 685 to 692 provides a ligand contact to ATP; that stretch reads GVAGCGKT. The region spanning 811–961 is the (+)RNA virus helicase C-terminal domain; sequence HKTYRCPQDV…AGDLIFNCVK (151 aa).

This sequence belongs to the bromoviridae replication protein 1a family. In terms of assembly, interacts with RNA-directed RNA polymerase 2a.

The protein resides in the host endoplasmic reticulum membrane. Involved in the virus replication. Contains a helicase domain and a methyltransferase domain. The methyltransferase domain is probably involved in viral RNA capping. Involved in the formation of ER membrane spherular invaginations in which RNA replication complexes form. The protein is Replication protein 1a of Bromus inermis (Smooth brome grass).